Here is a 62-residue protein sequence, read N- to C-terminus: Protein UL148D (62 aa).

Residues 30–50 (WWISVAIVIFIGVCLVALMYF) traverse the membrane as a helical segment.

It localises to the host membrane. The protein is Protein UL148D (UL148D) of Human cytomegalovirus (strain Merlin) (HHV-5).